The sequence spans 308 residues: Ribosomal protein L11 methyltransferase (308 aa).

Residues Thr148, Gly169, Asp191, and Asn239 each coordinate S-adenosyl-L-methionine.

Belongs to the methyltransferase superfamily. PrmA family.

It localises to the cytoplasm. The catalysed reaction is L-lysyl-[protein] + 3 S-adenosyl-L-methionine = N(6),N(6),N(6)-trimethyl-L-lysyl-[protein] + 3 S-adenosyl-L-homocysteine + 3 H(+). Methylates ribosomal protein L11. The sequence is that of Ribosomal protein L11 methyltransferase from Psychrobacter arcticus (strain DSM 17307 / VKM B-2377 / 273-4).